A 360-amino-acid polypeptide reads, in one-letter code: Photosystem II protein D1 (360 aa).

The next 3 membrane-spanning stretches (helical) occupy residues 29 to 46 (YIGW…TATS), 118 to 133 (HFLL…EWEL), and 142 to 156 (WIFV…AASA). H118 contacts chlorophyll a. Residue Y126 participates in pheophytin a binding. The [CaMn4O5] cluster site is built by D170 and E189. A helical membrane pass occupies residues 197–218 (FHMAGVAGVFGGSLFSAMHGSL). Residue H198 participates in chlorophyll a binding. Residues H215 and 264–265 (SF) each bind a quinone. Residue H215 coordinates Fe cation. H272 is a Fe cation binding site. The helical transmembrane segment at 274–288 (FLALWPVVGIWLTAM) threads the bilayer. [CaMn4O5] cluster-binding residues include H332, E333, D342, and A344. The propeptide occupies 345–360 (SGEVLPVALTAPAVNG).

It belongs to the reaction center PufL/M/PsbA/D family. PSII is composed of 1 copy each of membrane proteins PsbA, PsbB, PsbC, PsbD, PsbE, PsbF, PsbH, PsbI, PsbJ, PsbK, PsbL, PsbM, PsbT, PsbX, PsbY, PsbZ, Psb30/Ycf12, at least 3 peripheral proteins of the oxygen-evolving complex and a large number of cofactors. It forms dimeric complexes. It depends on The D1/D2 heterodimer binds P680, chlorophylls that are the primary electron donor of PSII, and subsequent electron acceptors. It shares a non-heme iron and each subunit binds pheophytin, quinone, additional chlorophylls, carotenoids and lipids. D1 provides most of the ligands for the Mn4-Ca-O5 cluster of the oxygen-evolving complex (OEC). There is also a Cl(-1) ion associated with D1 and D2, which is required for oxygen evolution. The PSII complex binds additional chlorophylls, carotenoids and specific lipids. as a cofactor. In terms of processing, tyr-161 forms a radical intermediate that is referred to as redox-active TyrZ, YZ or Y-Z. Post-translationally, C-terminally processed by CTPA; processing is essential to allow assembly of the oxygen-evolving complex and thus photosynthetic growth.

It is found in the plastid. Its subcellular location is the chloroplast thylakoid membrane. It carries out the reaction 2 a plastoquinone + 4 hnu + 2 H2O = 2 a plastoquinol + O2. Functionally, photosystem II (PSII) is a light-driven water:plastoquinone oxidoreductase that uses light energy to abstract electrons from H(2)O, generating O(2) and a proton gradient subsequently used for ATP formation. It consists of a core antenna complex that captures photons, and an electron transfer chain that converts photonic excitation into a charge separation. The D1/D2 (PsbA/PsbD) reaction center heterodimer binds P680, the primary electron donor of PSII as well as several subsequent electron acceptors. This Phaeodactylum tricornutum (strain CCAP 1055/1) protein is Photosystem II protein D1.